We begin with the raw amino-acid sequence, 82 residues long: Putative membrane protein insertion efficiency factor (82 aa).

Belongs to the UPF0161 family.

The protein localises to the cell inner membrane. Its function is as follows. Could be involved in insertion of integral membrane proteins into the membrane. The protein is Putative membrane protein insertion efficiency factor of Rickettsia rickettsii (strain Iowa).